We begin with the raw amino-acid sequence, 1449 residues long: Disease resistance protein RPP5 (1449 aa).

Positions R10–L178 constitute a TIR domain. Residue E85 is part of the active site. An NB-ARC domain is found at E192–V446. LRR repeat units lie at residues M549–P573, L574–A595, Y597–L618, G619–R642, L644–A665, M687–P710, K712–V732, E733–L755, G756–I779, A802–L825, E826–C849, L915–T939, L941–L962, Q963–L985, S986–W1011, A1028–L1052, Q1053–S1077, S1096–F1119, and T1120–L1143.

In terms of assembly, interacts with RSH1.

It catalyses the reaction NAD(+) + H2O = ADP-D-ribose + nicotinamide + H(+). Functionally, TIR-NB-LRR receptor-like protein that confers resistance to the pathogen Hyaloperonospora arabidopsis isolate Noco2 (downy mildew disease). Confers resistance to H.arabidopsis isolates Emoy2, Emwa1 and Noco2. The sequence is that of Disease resistance protein RPP5 from Arabidopsis thaliana (Mouse-ear cress).